The following is a 343-amino-acid chain: Plasminogen (343 aa).

Kringle domains lie at 1–17 (APQAPSVENPPEADCML) and 41–120 (AQEP…GCVA). The plasmin heavy chain A stretch occupies residues 1-140 (APQAPSVENP…LRRRSREHFC (140 aa)). Disulfide bonds link Cys15-Cys94, Cys36-Cys77, and Cys65-Cys89. In terms of domain architecture, Peptidase S1 spans 114-341 (VVGGCVATPH…YVPWIEETMR (228 aa)). Ser130 carries the post-translational modification Phosphoserine. A disulfide bridge links Cys140 with Cys156. The plasmin light chain B stretch occupies residues 141 to 343 (GGTLISPEWV…PWIEETMRRY (203 aa)). Residues His155 and Asp198 each act as charge relay system in the active site. A Phosphoserine modification is found at Ser221. Cystine bridges form between Cys232–Cys299, Cys262–Cys278, and Cys289–Cys317. Ser293 (charge relay system) is an active-site residue.

Belongs to the peptidase S1 family. Plasminogen subfamily. Interacts with CSPG4 and AMOT. Interacts (via the Kringle domains) with HRG; the interaction tethers PLG to the cell surface and enhances its activation. Interacts (via Kringle 4 domain) with ADA; the interaction stimulates PLG activation when in complex with DPP4. Angiostatin: Interacts with ATP5F1A; the interaction inhibits most of the angiogenic effects of angiostatin.

Its subcellular location is the secreted. It carries out the reaction Preferential cleavage: Lys-|-Xaa &gt; Arg-|-Xaa, higher selectivity than trypsin. Converts fibrin into soluble products.. Its activity is regulated as follows. Converted into plasmin by plasminogen activators, both plasminogen and its activator being bound to fibrin. Cannot be activated with streptokinase. In terms of biological role, plasmin dissolves the fibrin of blood clots and acts as a proteolytic factor in a variety of other processes including embryonic development, tissue remodeling, tumor invasion, and inflammation. In ovulation, weakens the walls of the Graafian follicle. It activates the urokinase-type plasminogen activator, collagenases and several complement zymogens, such as C1, C4 and C5. Cleavage of fibronectin and laminin leads to cell detachment and apoptosis. Also cleaves fibrin, thrombospondin and von Willebrand factor. Its role in tissue remodeling and tumor invasion may be modulated by CSPG4. Binds to cells. The protein is Plasminogen (PLG) of Ovis aries (Sheep).